Here is a 366-residue protein sequence, read N- to C-terminus: Zinc-regulated GTPase metalloprotein activator 1 (366 aa).

A psi-PxLVp motif motif is present at residues 5 to 12; that stretch reads DECPELVP. 31–38 contacts GTP; sequence GYLGAGKT. Residues Cys89, Cys91, and Cys92 each coordinate Zn(2+). A CXCC motif motif is present at residues 89 to 92; the sequence is CLCC. GTP is bound by residues 92-96 and 185-188; these read CSVKD and NKTD. The 100-residue stretch at 258 to 357 folds into the CobW C-terminal domain; that stretch reads TITFEVPGSV…GEILKKEFIS (100 aa).

Belongs to the SIMIBI class G3E GTPase family. ZNG1 subfamily.

Its subcellular location is the nucleus. It catalyses the reaction GTP + H2O = GDP + phosphate + H(+). Its function is as follows. Zinc chaperone that directly transfers zinc cofactor to target metalloproteins, thereby activating them. Catalyzes zinc insertion into the active site of methionine aminopeptidase METAP1, which function to cleave the initiator methionine from polypeptides during or after protein translation. Mechanistically, the N-terminal psi-PxLVp motif binds to the C6H2-type zinc finger of inactive form of METAP1. After formation of the docked complex, zinc is transferred from the CXCC motif in the GTPase domain of ZNG1 to the zinc binding site in the peptidase domain of METAP1 in a process requiring GTP hydrolysis. GTP/GDP exchange is required for release of active METAP1. The protein is Zinc-regulated GTPase metalloprotein activator 1 of Danio rerio (Zebrafish).